Reading from the N-terminus, the 234-residue chain is ATP synthase subunit delta, chloroplastic (234 aa).

A chloroplast-targeting transit peptide spans 1-47 (MASLQQTLFSLQSKLPPSSFQIARSLPLRKTFPIRINNGGNAAGARM). Ser48 carries the post-translational modification N-acetylserine. The N-linked (GlcNAc...) asparagine glycan is linked to Asn66. Thr234 bears the Phosphothreonine mark.

It belongs to the ATPase delta chain family. In terms of assembly, F-type ATPases have 2 components, F(1) - the catalytic core - and F(0) - the membrane proton channel. F(1) has five subunits: alpha(3), beta(3), gamma(1), delta(1), epsilon(1). CF(0) has four main subunits: a(1), b(1), b'(1) and c(10-14). The alpha and beta chains form an alternating ring which encloses part of the gamma chain. F(1) is attached to F(0) by a central stalk formed by the gamma and epsilon chains, while a peripheral stalk is formed by the delta, b and b' chains.

It localises to the plastid. It is found in the chloroplast thylakoid membrane. F(1)F(0) ATP synthase produces ATP from ADP in the presence of a proton or sodium gradient. F-type ATPases consist of two structural domains, F(1) containing the extramembraneous catalytic core and F(0) containing the membrane proton channel, linked together by a central stalk and a peripheral stalk. During catalysis, ATP synthesis in the catalytic domain of F(1) is coupled via a rotary mechanism of the central stalk subunits to proton translocation (Potential). Essential for photosynthesis, probably by facilitating electron transport in both photosystems I and II. In terms of biological role, this protein is part of the stalk that links CF(0) to CF(1). It either transmits conformational changes from CF(0) to CF(1) or is implicated in proton conduction. This Arabidopsis thaliana (Mouse-ear cress) protein is ATP synthase subunit delta, chloroplastic.